Consider the following 102-residue polypeptide: Small ribosomal subunit protein uS10 (102 aa).

Belongs to the universal ribosomal protein uS10 family. In terms of assembly, part of the 30S ribosomal subunit.

Its function is as follows. Involved in the binding of tRNA to the ribosomes. The chain is Small ribosomal subunit protein uS10 from Kineococcus radiotolerans (strain ATCC BAA-149 / DSM 14245 / SRS30216).